A 485-amino-acid polypeptide reads, in one-letter code: MATCSRQFTSSSSMKGSCGIGGGSSRMSSVLAGGSCRAPSTYGGMSRFSSAGAYAVGSGYGGGFSSSSFGGGFGGGIGGGIGGGLGGGIGGGFGGGIGGGFGGGIGSGFGGGLGDGLLVGSEKVTMQNLNDRLATYLDKVRALEEANSDLEVKIRDWYQRQRPTEIKDYSPYFKTIEDLKSKILAATVDNANVLLQIDNARLAADDFRTKFETEQSLRINVESDINGLRRVLDELTLARADLEMQIESLKEELAYLKKNHEEEMASMRGQVGGDVNVEMDAAPGVDLSRILNEMRDQYEKMAEKNRKDAEDWFFTKTEELNREVATNSELVQSGKSEISELRRTMQNLEIELQSQLSMKASLENNLEETKGRYCMQLAQIQEMIGSVEEQLAQLRCEMEQQNQEYKILLDVKTRLEQEIATYRRLLEGEDAHLSSAQFSSSSQFSSGSQSSRDVTSTNRQIRTKVMDVHDGKVVSTHEQVLRTKN.

Residues 1–15 are compositionally biased toward polar residues; the sequence is MATCSRQFTSSSSMK. A disordered region spans residues 1–21; that stretch reads MATCSRQFTSSSSMKGSCGIG. The head stretch occupies residues 1-121; the sequence is MATCSRQFTS…GLGDGLLVGS (121 aa). Residues 122-157 are coil 1A; the sequence is EKVTMQNLNDRLATYLDKVRALEEANSDLEVKIRDW. Residues 122–433 form the IF rod domain; the sequence is EKVTMQNLND…RLLEGEDAHL (312 aa). Positions 158–175 are linker 1; it reads YQRQRPTEIKDYSPYFKT. Positions 176–267 are coil 1B; it reads IEDLKSKILA…KNHEEEMASM (92 aa). The interval 268–290 is linker 12; the sequence is RGQVGGDVNVEMDAAPGVDLSRI. Positions 291–429 are coil 2; that stretch reads LNEMRDQYEK…ATYRRLLEGE (139 aa). Residues 430–485 are tail; it reads DAHLSSAQFSSSSQFSSGSQSSRDVTSTNRQIRTKVMDVHDGKVVSTHEQVLRTKN. The interval 432–485 is interaction with Type I keratins and keratin filaments; that stretch reads HLSSAQFSSSSQFSSGSQSSRDVTSTNRQIRTKVMDVHDGKVVSTHEQVLRTKN. A compositionally biased stretch (low complexity) spans 437–451; that stretch reads QFSSSSQFSSGSQSS. Positions 437-458 are disordered; that stretch reads QFSSSSQFSSGSQSSRDVTSTN. Position 448 is a phosphoserine (Ser448).

Belongs to the intermediate filament family. As to quaternary structure, heterotetramer of two type I and two type II keratins. Forms a disulfide-linked heterodimer (via 2B domains) with KRT5 (via 2B domains). Forms a heterodimer with KRT1; the interaction is more abundant in the absence of KRT5. Interacts with TRADD and with keratin filaments. Associates with other type I keratins. Interacts with EPPK1. Interacts with KLHL24. Interacts with PKP1 (via N-terminus) and PKP2. A disulfide bond is formed between rather than within filaments and promotes the formation of a keratin filament cage around the nucleus. In terms of processing, ubiquitinated by the BCR(KLHL24) E3 ubiquitin ligase complex. Expressed in most cells of squamous cell carcinomas, in spinous and suprabasal cells around the branching papillary region of papillomas, and weakly in a few proliferative cells of hyperplastic tissue.

Its subcellular location is the cytoplasm. The protein resides in the nucleus. Its function is as follows. The nonhelical tail domain is involved in promoting KRT5-KRT14 filaments to self-organize into large bundles and enhances the mechanical properties involved in resilience of keratin intermediate filaments in vitro. The protein is Keratin, type I cytoskeletal 14 (Krt14) of Rattus norvegicus (Rat).